The primary structure comprises 594 residues: UvrABC system protein C (594 aa).

One can recognise a GIY-YIG domain in the interval 13-99; it reads HSSGVYQYFD…IKQLKPKYNI (87 aa). One can recognise a UVR domain in the interval 205–240; it reads DKLIKELELKMERLSNNLRFEEALIYRDRIAKIQKI.

It belongs to the UvrC family. Interacts with UvrB in an incision complex.

The protein resides in the cytoplasm. In terms of biological role, the UvrABC repair system catalyzes the recognition and processing of DNA lesions. UvrC both incises the 5' and 3' sides of the lesion. The N-terminal half is responsible for the 3' incision and the C-terminal half is responsible for the 5' incision. The sequence is that of UvrABC system protein C from Helicobacter pylori (strain HPAG1).